A 159-amino-acid chain; its full sequence is Stress-induced protein 1 (159 aa).

The sHSP domain maps to 33-141 (NNFNNIVPQQ…TVRALPIHTS (109 aa)).

The protein belongs to the small heat shock protein (HSP20) family.

The polypeptide is Stress-induced protein 1 (Caenorhabditis elegans).